A 426-amino-acid polypeptide reads, in one-letter code: Serine--tRNA ligase (426 aa).

The span at 1–15 (MIDVKDLSENPDKFR) shows a compositional bias: basic and acidic residues. Residues 1-20 (MIDVKDLSENPDKFRASQRA) are disordered. Residue 228–230 (TSE) coordinates L-serine. ATP-binding positions include 259 to 261 (RRE) and valine 275. Glutamate 282 is an L-serine binding site. 346 to 349 (ELTS) provides a ligand contact to ATP. Residue threonine 386 coordinates L-serine.

Belongs to the class-II aminoacyl-tRNA synthetase family. Type-1 seryl-tRNA synthetase subfamily. In terms of assembly, homodimer. The tRNA molecule binds across the dimer.

It is found in the cytoplasm. The enzyme catalyses tRNA(Ser) + L-serine + ATP = L-seryl-tRNA(Ser) + AMP + diphosphate + H(+). The catalysed reaction is tRNA(Sec) + L-serine + ATP = L-seryl-tRNA(Sec) + AMP + diphosphate + H(+). It functions in the pathway aminoacyl-tRNA biosynthesis; selenocysteinyl-tRNA(Sec) biosynthesis; L-seryl-tRNA(Sec) from L-serine and tRNA(Sec): step 1/1. Functionally, catalyzes the attachment of serine to tRNA(Ser). Is also able to aminoacylate tRNA(Sec) with serine, to form the misacylated tRNA L-seryl-tRNA(Sec), which will be further converted into selenocysteinyl-tRNA(Sec). The sequence is that of Serine--tRNA ligase from Paenarthrobacter aurescens (strain TC1).